The primary structure comprises 211 residues: Probable GTP-binding protein EngB (211 aa).

The EngB-type G domain occupies 21–205; the sequence is LMATIVFVGR…KNRIYEIIRE (185 aa). GTP contacts are provided by residues 29 to 36, 54 to 58, 71 to 74, 151 to 154, and 184 to 186; these read GRSNVGKS, GVTRK, DMPG, NKLD, and ISA. Ser-36 and Thr-56 together coordinate Mg(2+).

Belongs to the TRAFAC class TrmE-Era-EngA-EngB-Septin-like GTPase superfamily. EngB GTPase family. Mg(2+) serves as cofactor.

Its function is as follows. Necessary for normal cell division and for the maintenance of normal septation. This chain is Probable GTP-binding protein EngB, found in Pyrococcus abyssi (strain GE5 / Orsay).